An 85-amino-acid polypeptide reads, in one-letter code: UPF0291 protein SPH_1589 (85 aa).

The segment at 62 to 85 is disordered; the sequence is TPEKLRQVQREKGLHGRSLDDPNS.

Belongs to the UPF0291 family.

It is found in the cytoplasm. The polypeptide is UPF0291 protein SPH_1589 (Streptococcus pneumoniae (strain Hungary19A-6)).